Reading from the N-terminus, the 458-residue chain is Cysteine--tRNA ligase (458 aa).

Cysteine 29 lines the Zn(2+) pocket. A 'HIGH' region motif is present at residues 31-41 (PTVYDFLHIGN). Positions 211, 236, and 240 each coordinate Zn(2+). The 'KMSKS' region signature appears at 269 to 273 (KMSKS). Lysine 272 contributes to the ATP binding site.

This sequence belongs to the class-I aminoacyl-tRNA synthetase family. Monomer. Zn(2+) is required as a cofactor.

The protein localises to the cytoplasm. The catalysed reaction is tRNA(Cys) + L-cysteine + ATP = L-cysteinyl-tRNA(Cys) + AMP + diphosphate. The polypeptide is Cysteine--tRNA ligase (Beijerinckia indica subsp. indica (strain ATCC 9039 / DSM 1715 / NCIMB 8712)).